The chain runs to 154 residues: Large ribosomal subunit protein uL13 (154 aa).

This sequence belongs to the universal ribosomal protein uL13 family. As to quaternary structure, part of the 50S ribosomal subunit.

This protein is one of the early assembly proteins of the 50S ribosomal subunit, although it is not seen to bind rRNA by itself. It is important during the early stages of 50S assembly. This chain is Large ribosomal subunit protein uL13, found in Brucella abortus (strain S19).